We begin with the raw amino-acid sequence, 313 residues long: Protein FixB (313 aa).

FAD is bound at residue 255–283 (LYLAVGISGQIQHMVGANASQTIFAINKD).

This sequence belongs to the ETF alpha-subunit/FixB family. Heterodimer of FixA and FixB.

It functions in the pathway amine and polyamine metabolism; carnitine metabolism. Functionally, required for anaerobic carnitine reduction. May bring reductant to CaiA. This Escherichia coli O1:K1 / APEC protein is Protein FixB.